Reading from the N-terminus, the 179-residue chain is Cell division protein SepF (179 aa).

The segment at 19-55 is disordered; that stretch reads DSSLPYEKRDEPVFTSVNSSQEPALPMNQPSQSAGAK. Residues 33-55 show a composition bias toward polar residues; it reads TSVNSSQEPALPMNQPSQSAGAK.

This sequence belongs to the SepF family. Homodimer. Interacts with FtsZ.

The protein localises to the cytoplasm. Its function is as follows. Cell division protein that is part of the divisome complex and is recruited early to the Z-ring. Probably stimulates Z-ring formation, perhaps through the cross-linking of FtsZ protofilaments. Its function overlaps with FtsA. In Streptococcus pneumoniae (strain JJA), this protein is Cell division protein SepF.